Here is a 138-residue protein sequence, read N- to C-terminus: Hexon-interlacing protein (138 aa).

Residues 100 to 127 (LLVLLAQLEALTQRLGELSKQVAQLREQ) adopt a coiled-coil conformation.

It belongs to the adenoviridae hexon-interlacing protein family. Homotrimer. Interacts with hexon protein; this interaction tethers the hexons together. Self-interacts with adjacent proteins. Interacts with kinesin light chain KLC1; this interaction leads to capsid disruption at the nuclear pore complex during virus entry into host cell.

Its subcellular location is the virion. The protein resides in the host nucleus. Its function is as follows. Structural component of the virion that acts as a cement protein on the capsid exterior and forms triskelion structures consisting of three molecules that stabilize three hexon trimers at the center of each icosahedral facet and fixes the peripentonal hexons. Dispensable for assembly. During virus entry, recruits the anterograde motor kinesin-1 to the capsid docked at the nuclear pore complex thereby subjecting the docked capsid to a pulling force. The resulting tension leads to capsid disruption, dispersion of capsid fragments toward cell periphery and eventually viral DNA entry into the host nucleus. In Human adenovirus B serotype 7 (HAdV-7), this protein is Hexon-interlacing protein.